Consider the following 200-residue polypeptide: Small ribosomal subunit protein uS4 (200 aa).

The interval 22 to 43 (TGKELERRPYAPGQHGPTQRKK) is disordered. The S4 RNA-binding domain maps to 92-170 (QRLDNIVYRL…VPEYVTFDAE (79 aa)).

The protein belongs to the universal ribosomal protein uS4 family. In terms of assembly, part of the 30S ribosomal subunit. Contacts protein S5. The interaction surface between S4 and S5 is involved in control of translational fidelity.

Its function is as follows. One of the primary rRNA binding proteins, it binds directly to 16S rRNA where it nucleates assembly of the body of the 30S subunit. In terms of biological role, with S5 and S12 plays an important role in translational accuracy. The sequence is that of Small ribosomal subunit protein uS4 from Listeria welshimeri serovar 6b (strain ATCC 35897 / DSM 20650 / CCUG 15529 / CIP 8149 / NCTC 11857 / SLCC 5334 / V8).